The primary structure comprises 142 residues: Large ribosomal subunit protein uL11 (142 aa).

The protein belongs to the universal ribosomal protein uL11 family. Part of the ribosomal stalk of the 50S ribosomal subunit. Interacts with L10 and the large rRNA to form the base of the stalk. L10 forms an elongated spine to which L12 dimers bind in a sequential fashion forming a multimeric L10(L12)X complex. Post-translationally, one or more lysine residues are methylated.

Forms part of the ribosomal stalk which helps the ribosome interact with GTP-bound translation factors. This Shewanella loihica (strain ATCC BAA-1088 / PV-4) protein is Large ribosomal subunit protein uL11.